The primary structure comprises 358 residues: Phosphoserine aminotransferase (358 aa).

Residue arginine 43 coordinates L-glutamate. 4 residues coordinate pyridoxal 5'-phosphate: tryptophan 103, threonine 153, aspartate 172, and glutamine 195. Position 196 is an N6-(pyridoxal phosphate)lysine (lysine 196). Pyridoxal 5'-phosphate is bound at residue 236-237 (NT).

This sequence belongs to the class-V pyridoxal-phosphate-dependent aminotransferase family. SerC subfamily. Homodimer. It depends on pyridoxal 5'-phosphate as a cofactor.

The protein localises to the cytoplasm. It carries out the reaction O-phospho-L-serine + 2-oxoglutarate = 3-phosphooxypyruvate + L-glutamate. The enzyme catalyses 4-(phosphooxy)-L-threonine + 2-oxoglutarate = (R)-3-hydroxy-2-oxo-4-phosphooxybutanoate + L-glutamate. It participates in amino-acid biosynthesis; L-serine biosynthesis; L-serine from 3-phospho-D-glycerate: step 2/3. It functions in the pathway cofactor biosynthesis; pyridoxine 5'-phosphate biosynthesis; pyridoxine 5'-phosphate from D-erythrose 4-phosphate: step 3/5. Its function is as follows. Catalyzes the reversible conversion of 3-phosphohydroxypyruvate to phosphoserine and of 3-hydroxy-2-oxo-4-phosphonooxybutanoate to phosphohydroxythreonine. The polypeptide is Phosphoserine aminotransferase (Dichelobacter nodosus (strain VCS1703A)).